Reading from the N-terminus, the 564-residue chain is Proline--tRNA ligase (564 aa).

It belongs to the class-II aminoacyl-tRNA synthetase family. ProS type 1 subfamily. As to quaternary structure, homodimer.

The protein localises to the cytoplasm. It carries out the reaction tRNA(Pro) + L-proline + ATP = L-prolyl-tRNA(Pro) + AMP + diphosphate. Functionally, catalyzes the attachment of proline to tRNA(Pro) in a two-step reaction: proline is first activated by ATP to form Pro-AMP and then transferred to the acceptor end of tRNA(Pro). As ProRS can inadvertently accommodate and process non-cognate amino acids such as alanine and cysteine, to avoid such errors it has two additional distinct editing activities against alanine. One activity is designated as 'pretransfer' editing and involves the tRNA(Pro)-independent hydrolysis of activated Ala-AMP. The other activity is designated 'posttransfer' editing and involves deacylation of mischarged Ala-tRNA(Pro). The misacylated Cys-tRNA(Pro) is not edited by ProRS. The polypeptide is Proline--tRNA ligase (Xylella fastidiosa (strain Temecula1 / ATCC 700964)).